Here is a 137-residue protein sequence, read N- to C-terminus: Nucleoside diphosphate kinase (137 aa).

ATP-binding residues include Lys-11, Phe-59, Arg-87, Thr-93, Arg-104, and Asn-114. Residue His-117 is the Pros-phosphohistidine intermediate of the active site.

It belongs to the NDK family. As to quaternary structure, homotetramer. Requires Mg(2+) as cofactor.

Its subcellular location is the cytoplasm. The catalysed reaction is a 2'-deoxyribonucleoside 5'-diphosphate + ATP = a 2'-deoxyribonucleoside 5'-triphosphate + ADP. It carries out the reaction a ribonucleoside 5'-diphosphate + ATP = a ribonucleoside 5'-triphosphate + ADP. Functionally, major role in the synthesis of nucleoside triphosphates other than ATP. The ATP gamma phosphate is transferred to the NDP beta phosphate via a ping-pong mechanism, using a phosphorylated active-site intermediate. In Parafrankia sp. (strain EAN1pec), this protein is Nucleoside diphosphate kinase.